Here is a 303-residue protein sequence, read N- to C-terminus: MSFTTKVKEELIHLSTGDNNELAAIIKLSGSLGLAHQSLHLSITTENAKIARYIYSLIEDAYVIVPEIRYHQKTNLRKNRVYTVYVEQGVETILADLKLADSFFGLETGIEPQVLSDDNAGRSYLKGAFLAAGSIRDPESGKYQLEIYSVYLDHAQDLAQLMQKFMLDAKTIEHKSGAVTYVQKAEDIMDFLIIIGAMSCKEDFEAIKLLREARNDINRANNAETANIAKTISASMKTINNIIKIMDTIGLESLPIELQQVAQLRVKHPDYSIQQVADALEFPITKSGVNHRLRKINKIADDL.

A DNA-binding region (H-T-H motif) is located at residues 272 to 303 (SIQQVADALEFPITKSGVNHRLRKINKIADDL).

This sequence belongs to the WhiA family.

In terms of biological role, involved in cell division and chromosome segregation. This is Probable cell division protein WhiA from Streptococcus pyogenes serotype M12 (strain MGAS2096).